We begin with the raw amino-acid sequence, 2235 residues long: Bridge-like lipid transfer protein family member 2 (2235 aa).

A signal peptide spans 1 to 31 (MPLFFSALLVLLLVALSALFLGRWLVVRLAT). Residues 29 to 108 (LATKWCQRKL…LQKVSDLSAP (80 aa)) are transmembrane domain. At S563 the chain carries Phosphoserine. A glycan (N-linked (GlcNAc...) asparagine) is linked at N730. A disordered region spans residues 1495 to 1529 (PQMPAKKPKRGVPTSASAPPRVNTPSFSGQPDKGS). A coiled-coil region spans residues 1813-1885 (SILHLQEAVR…LNILIRCFKD (73 aa)). S1846, S2090, and S2094 each carry phosphoserine. The segment at 2074–2099 (GKGVAQGLTRSSGVRRSFRKSPEHPV) is disordered.

The protein belongs to the SABRE family. In terms of tissue distribution, expressed in pancreas, placenta and up-regulated in breast carcinoma epithelial cells, ductal in situ carcinoma (DCIS), invasive breast carcinoma (IBC) and metastatic breast carcinoma cells (MET).

Its subcellular location is the cell membrane. The protein localises to the endoplasmic reticulum membrane. It is found in the mitochondrion membrane. Its function is as follows. Tube-forming lipid transport protein which binds to phosphatidylinositols and affects phosphatidylinositol-4,5-bisphosphate (PtdIns-4,5-P2) distribution. In Homo sapiens (Human), this protein is Bridge-like lipid transfer protein family member 2.